An 848-amino-acid polypeptide reads, in one-letter code: Adenylate cyclase (848 aa).

The segment at 1-535 (MYLYIETLKQ…DVSHHFPLRL (535 aa)) is catalytic. A regulatory region spans residues 541–848 (KALYSPCEIR…DAPLLQQYFS (308 aa)). His-609 bears the Phosphohistidine; by CRR mark.

The protein belongs to the adenylyl cyclase class-1 family.

Its subcellular location is the cytoplasm. The catalysed reaction is ATP = 3',5'-cyclic AMP + diphosphate. The chain is Adenylate cyclase (cyaA) from Escherichia coli O6:H1 (strain CFT073 / ATCC 700928 / UPEC).